A 433-amino-acid chain; its full sequence is N-lysine methyltransferase SMYD2 (433 aa).

Positions 7 to 241 constitute an SET domain; the sequence is GGLERFCSAG…PGDEVFTSYI (235 aa). 17-19 is a binding site for S-adenosyl-L-methionine; the sequence is KGR. Zn(2+) is bound by residues Cys-52, Cys-55, Cys-65, Cys-68, Cys-74, Cys-78, His-86, and Cys-90. The MYND-type zinc finger occupies 52–90; that stretch reads CECCFARKEGLSKCGRCKQAFYCDVECQKEDWPLHKLEC. Residues His-137, 206-207, and 258-260 contribute to the S-adenosyl-L-methionine site; these read NH and YFF. Ser-283 is subject to Phosphoserine.

Belongs to the class V-like SAM-binding methyltransferase superfamily. As to quaternary structure, interacts (via MYND-type zinc finger) with EPB41L3. Interacts (via SET domain) with p53/TP53. Interacts with RB1 and HSP90AA1. Interacts with RNA polymerase II and HELZ. Interacts with SIN3A and HDAC1. As to expression, highly expressed in heart, skeletal muscle and brain tissue. During cardiac development, it is differentially expressed with highest expression in the neonatal heart while very low expression is detected at 12.5 dpc and adult. Specifically expressed in cardiomyocytes (at protein level).

The protein resides in the cytoplasm. It localises to the cytosol. The protein localises to the nucleus. It carries out the reaction L-lysyl(4)-[histone H3] + 3 S-adenosyl-L-methionine = N(6),N(6),N(6)-trimethyl-L-lysyl(4)-[histone H3] + 3 S-adenosyl-L-homocysteine + 3 H(+). The catalysed reaction is L-lysyl-[protein] + S-adenosyl-L-methionine = N(6)-methyl-L-lysyl-[protein] + S-adenosyl-L-homocysteine + H(+). Functionally, protein-lysine N-methyltransferase that methylates both histones and non-histone proteins, including p53/TP53 and RB1. Specifically trimethylates histone H3 'Lys-4' (H3K4me3) in vivo. The activity requires interaction with HSP90alpha. Shows even higher methyltransferase activity on p53/TP53. Monomethylates 'Lys-370' of p53/TP53, leading to decreased DNA-binding activity and subsequent transcriptional regulation activity of p53/TP53. Monomethylates RB1 at 'Lys-860'. This Mus musculus (Mouse) protein is N-lysine methyltransferase SMYD2 (Smyd2).